Here is a 1161-residue protein sequence, read N- to C-terminus: Lethal(2) giant larvae protein (1161 aa).

The phospho-regulated basic and hydrophobic (PRBH) motif stretch occupies residues 15-86 (DRHRLQKDLF…NNSASELNVQ (72 aa)). WD repeat units lie at residues 39–72 (SALAYDPVLKLMAIGTQTGALKVFGQPGVELYGQ), 82–128 (ELNV…DGKL), 131–167 (VSSLCCSLSKDLLWIGTEGGNIYQLDLHTFTIKEPVI), 189–223 (SIRQLPNSPSKLLVAYNRGLCVLWDFESASVQRAY), 231–263 (SVGLTVNFEGSEFTWYHADGSYATWSIDNPEPP), 278–320 (SINR…GHKV), 328–358 (VIDFFVTFENNRDVAEVLVVLLEEELCAYDL), and 380–464 (TCNY…YNFK). A phosphoserine mark is found at S473 and S484. WD repeat units follow at residues 513–594 (KKIA…SGVL) and 603–664 (TCMA…LRES). Residue S679 is modified to Phosphoserine. WD repeat units follow at residues 708–778 (VRCL…KEIQ), 787–832 (GISI…LKPI), 837–927 (LTAN…LNAA), and 941–964 (CFTNSGEALYMMSSSELQRIALAT). Phosphoserine occurs at positions 808, 869, 876, 887, 889, and 893. The residue at position 1013 (S1013) is a Phosphoserine. The disordered stretch occupies residues 1141 to 1161 (EKTNGDNKIGTPKTAPEESQF).

The protein belongs to the WD repeat L(2)GL family. As to quaternary structure, may form multimeric complexes. Interacts with mahj. Interacts with aPKC; leading to phosphorylation. Interacts with ball. Post-translationally, phosphorylated by aPKC which lowers lipid affinity and promotes dissociation from the cell cortex. In developing oocytes, aPKC-mediated phosphorylation restricts activity to the oocyte posterior and is required for oocyte polarity formation. In terms of tissue distribution, expressed in the epithelial cells of the digestive tract and in gonads.

Its subcellular location is the cytoplasm. The protein localises to the cell cortex. Its function is as follows. Essential for the development of polarized epithelia, for cell polarity associated with asymmetric cell division of neuroblasts during development, and for oocyte polarity formation. Promotes the formation of actin-rich projections at the oocyte cortex and the posterior enrichment of par-1 which is required for oocyte polarization. Regulates the localization of axis-specifying morphogens such as stau and grk. In terms of biological role, has an essential role in control of cell proliferation and differentiation during development and could act as a tumor suppressor. Has an accessory function in control of cell proliferation and differentiation during development. This is Lethal(2) giant larvae protein (l(2)gl) from Drosophila melanogaster (Fruit fly).